A 63-amino-acid chain; its full sequence is MKILCFFIVLLFVAVHGAVGFSRSPRYHMQCGYRGTFCTPGKCPHGNAYLGLCRPKYSCCRWL.

Residues 1–19 form the signal peptide; sequence MKILCFFIVLLFVAVHGAV. A propeptide spanning residues 20-25 is cleaved from the precursor; sequence GFSRSP. Cystine bridges form between C31–C59, C38–C53, and C43–C60.

This sequence belongs to the beta-defensin family. As to expression, strong expression in the bone marrow and testis. Widely expressed. Weak expression in the ovarian stroma, but not expressed in the ovarian follicles.

Its subcellular location is the secreted. The protein resides in the cytoplasmic granule. In terms of biological role, has bactericidal activity. Potent activity against S.typhimurium and S.entiriditis. The chain is Gallinacin-4 (GAL4) from Gallus gallus (Chicken).